A 350-amino-acid chain; its full sequence is Kelch domain-containing protein 8A (350 aa).

Kelch repeat units lie at residues 1-31 (MEVP…ETGG), 32-79 (QVYA…ALGK), 81-127 (IMVI…AKDY), 128-175 (RVYA…LRGS), 176-222 (KIYV…TLDN), 224-278 (LYSL…SLSG), and 279-326 (RVIV…VVKN).

This is Kelch domain-containing protein 8A (KLHDC8A) from Homo sapiens (Human).